The following is a 334-amino-acid chain: Heme A synthase (334 aa).

Transmembrane regions (helical) follow at residues 6–26, 93–113, 119–139, 154–174, and 189–209; these read ITRW…IGGI, GRIT…QGVI, LPYI…WYMV, LAFH…QLIK, and LIFS…GALV. His253 contributes to the heme binding site. 3 consecutive transmembrane segments (helical) span residues 255–275, 282–302, and 305–325; these read LGGF…FKVK, IAYF…ITIV, and VPII…SIII. His313 lines the heme pocket.

This sequence belongs to the COX15/CtaA family. Type 2 subfamily. Interacts with CtaB. Heme b is required as a cofactor.

It localises to the cell membrane. The enzyme catalyses Fe(II)-heme o + 2 A + H2O = Fe(II)-heme a + 2 AH2. It participates in porphyrin-containing compound metabolism; heme A biosynthesis; heme A from heme O: step 1/1. Its function is as follows. Catalyzes the conversion of heme O to heme A by two successive hydroxylations of the methyl group at C8. The first hydroxylation forms heme I, the second hydroxylation results in an unstable dihydroxymethyl group, which spontaneously dehydrates, resulting in the formyl group of heme A. This Rickettsia prowazekii (strain Madrid E) protein is Heme A synthase.